Here is a 278-residue protein sequence, read N- to C-terminus: Casein kinase II subunit beta (278 aa).

2 disordered regions span residues 1–22 and 78–111; these read MSQE…DSGA and DEEE…RNKS. Residue Ser2 is modified to N-acetylserine. Ser2 bears the Phosphoserine mark. The segment covering 78–94 has biased composition (acidic residues); it reads DEEEDEDDVVEEDEVDQ.

Belongs to the casein kinase 2 subunit beta family. In terms of assembly, tetramer composed of an alpha subunit, an alpha' subunit, one beta subunit and one beta' subunit. Interacts with FACT subunits POB3 and SPT16. interacts with YTA7. Post-translationally, phosphorylated by alpha subunit.

In terms of biological role, regulatory subunit of casein kinase II/CK2. As part of the kinase complex regulates the basal catalytic activity of the alpha subunit a constitutively active serine/threonine-protein kinase that phosphorylates a large number of substrates containing acidic residues C-terminal to the phosphorylated serine or threonine. This chain is Casein kinase II subunit beta (CKB1), found in Saccharomyces cerevisiae (strain ATCC 204508 / S288c) (Baker's yeast).